The chain runs to 215 residues: Thiamine-phosphate synthase (215 aa).

4-amino-2-methyl-5-(diphosphooxymethyl)pyrimidine is bound by residues 42–46 and Asp-77; that span reads QYREK. Mg(2+) is bound by residues Asp-78 and Asp-97. Ser-116 is a binding site for 4-amino-2-methyl-5-(diphosphooxymethyl)pyrimidine. 143 to 145 lines the 2-[(2R,5Z)-2-carboxy-4-methylthiazol-5(2H)-ylidene]ethyl phosphate pocket; it reads TKS. Lys-146 serves as a coordination point for 4-amino-2-methyl-5-(diphosphooxymethyl)pyrimidine. 2-[(2R,5Z)-2-carboxy-4-methylthiazol-5(2H)-ylidene]ethyl phosphate contacts are provided by residues Gly-174 and 194-195; that span reads IS.

This sequence belongs to the thiamine-phosphate synthase family. It depends on Mg(2+) as a cofactor.

The catalysed reaction is 2-[(2R,5Z)-2-carboxy-4-methylthiazol-5(2H)-ylidene]ethyl phosphate + 4-amino-2-methyl-5-(diphosphooxymethyl)pyrimidine + 2 H(+) = thiamine phosphate + CO2 + diphosphate. The enzyme catalyses 2-(2-carboxy-4-methylthiazol-5-yl)ethyl phosphate + 4-amino-2-methyl-5-(diphosphooxymethyl)pyrimidine + 2 H(+) = thiamine phosphate + CO2 + diphosphate. It carries out the reaction 4-methyl-5-(2-phosphooxyethyl)-thiazole + 4-amino-2-methyl-5-(diphosphooxymethyl)pyrimidine + H(+) = thiamine phosphate + diphosphate. It participates in cofactor biosynthesis; thiamine diphosphate biosynthesis; thiamine phosphate from 4-amino-2-methyl-5-diphosphomethylpyrimidine and 4-methyl-5-(2-phosphoethyl)-thiazole: step 1/1. Functionally, condenses 4-methyl-5-(beta-hydroxyethyl)thiazole monophosphate (THZ-P) and 2-methyl-4-amino-5-hydroxymethyl pyrimidine pyrophosphate (HMP-PP) to form thiamine monophosphate (TMP). The sequence is that of Thiamine-phosphate synthase from Limosilactobacillus reuteri (strain DSM 20016) (Lactobacillus reuteri).